Here is a 180-residue protein sequence, read N- to C-terminus: Large ribosomal subunit protein uL22 (180 aa).

2 disordered regions span residues 1–20 and 160–180; these read MTKPVYSKTPSNPEKSCKSR and PKPAEESAQKKKSVATQEISA. Residues 8-20 show a composition bias toward polar residues; it reads KTPSNPEKSCKSR.

It belongs to the universal ribosomal protein uL22 family.

This chain is Large ribosomal subunit protein uL22 (rpl17), found in Dictyostelium discoideum (Social amoeba).